Reading from the N-terminus, the 678-residue chain is Vacuolar protein sorting-associated protein 1 (678 aa).

A Dynamin-type G domain is found at 24 to 311 (LIDLPQITVV…LMHHIRNTLP (288 aa)). The tract at residues 34-41 (RSQSSGKS) is G1 motif. 34-41 (RSQSSGKS) contacts GTP. The tract at residues 60–62 (VTR) is G2 motif. The disordered stretch occupies residues 71-96 (NRPSASGKNEETTTDSDGKDQNNSSE). Positions 78–90 (KNEETTTDSDGKD) are enriched in basic and acidic residues. The segment at 153–156 (DLPG) is G3 motif. GTP is bound by residues 153–157 (DLPGL) and 222–225 (TKVD). The interval 222–225 (TKVD) is G4 motif. Residues 252-255 (INRG) form a G5 motif region. Positions 592–678 (TEVIKLLIMS…LQASEIVSNV (87 aa)) constitute a GED domain.

The protein belongs to the TRAFAC class dynamin-like GTPase superfamily. Dynamin/Fzo/YdjA family.

The chain is Vacuolar protein sorting-associated protein 1 (vps1) from Schizosaccharomyces pombe (strain 972 / ATCC 24843) (Fission yeast).